Consider the following 905-residue polypeptide: Core protein VP3 (905 aa).

Belongs to the orbivirus VP3 family.

The protein localises to the virion. Functionally, the VP3 protein is one of the five proteins (with VP1, VP4, VP6 and VP7) which form the inner capsid of the virus. This is Core protein VP3 (Segment-3) from African horse sickness virus 6 (AHSV-6).